The primary structure comprises 222 residues: Eukaryotic translation initiation factor 3 subunit K (222 aa).

Residues 46–208 (YDLEANLAVL…KIKTKNITEK (163 aa)) form the PCI domain.

Belongs to the eIF-3 subunit K family. As to quaternary structure, component of the eukaryotic translation initiation factor 3 (eIF-3) complex. The eIF-3 complex interacts with pix.

Its subcellular location is the cytoplasm. Component of the eukaryotic translation initiation factor 3 (eIF-3) complex, which is involved in protein synthesis of a specialized repertoire of mRNAs and, together with other initiation factors, stimulates binding of mRNA and methionyl-tRNAi to the 40S ribosome. The eIF-3 complex specifically targets and initiates translation of a subset of mRNAs involved in cell proliferation. The polypeptide is Eukaryotic translation initiation factor 3 subunit K (Drosophila ananassae (Fruit fly)).